The primary structure comprises 390 residues: MVKLLELFITSSKPVVEILLITSVGFYMALDGVNLLGHDARKYLNNIVFYVFSPSLIGSRLADSVTYESLVKMWFMPVNVLLTFIIGSLLGWIVIVITKPPSHLRGLILGCCAAGNLGNMPLIIIPAVCKEKGGPFGDPESCQKYGMGYVALSMAMGSIYIWTYVYNLMRVLSNSPVETPPSVESNYDSYKVPLISSKEEENNQKAGRWEKVKRRLVSLSQKVNLKTIFAPSTIAAMIALVIGLITPLRKLIIGTEAPLRVLQDSVTLVGDGAVPAMTMIIGGNLLKGLRSSGMKMSSIIGVLVARYVLLPMSGVLIVRGAYKLDLVTSEPLYQFVLLLQYAVPPAMNLGTITQLFGTGESECSVIMLWTYSLASIALTVWPTFFMWLVA.

Over 1 to 14 (MVKLLELFITSSKP) the chain is Lumenal. Residues 15-35 (VVEILLITSVGFYMALDGVNL) traverse the membrane as a helical segment. The Cytoplasmic portion of the chain corresponds to 36 to 43 (LGHDARKY). A helical transmembrane segment spans residues 44 to 61 (LNNIVFYVFSPSLIGSRL). The Lumenal portion of the chain corresponds to 62-76 (ADSVTYESLVKMWFM). A helical transmembrane segment spans residues 77 to 97 (PVNVLLTFIIGSLLGWIVIVI). Residues 98-107 (TKPPSHLRGL) lie on the Cytoplasmic side of the membrane. A helical transmembrane segment spans residues 108–128 (ILGCCAAGNLGNMPLIIIPAV). Over 129–144 (CKEKGGPFGDPESCQK) the chain is Lumenal. Residues 145–165 (YGMGYVALSMAMGSIYIWTYV) form a helical membrane-spanning segment. The Cytoplasmic segment spans residues 166–227 (YNLMRVLSNS…SLSQKVNLKT (62 aa)). Residues 228-248 (IFAPSTIAAMIALVIGLITPL) traverse the membrane as a helical segment. The Lumenal portion of the chain corresponds to 249 to 265 (RKLIIGTEAPLRVLQDS). A helical transmembrane segment spans residues 266 to 286 (VTLVGDGAVPAMTMIIGGNLL). Residues 287-297 (KGLRSSGMKMS) lie on the Cytoplasmic side of the membrane. Residues 298–318 (SIIGVLVARYVLLPMSGVLIV) form a helical membrane-spanning segment. Residues 319–331 (RGAYKLDLVTSEP) are Lumenal-facing. Residues 332-352 (LYQFVLLLQYAVPPAMNLGTI) traverse the membrane as a helical segment. Over 353–364 (TQLFGTGESECS) the chain is Cytoplasmic. Residues 365–385 (VIMLWTYSLASIALTVWPTFF) form a helical membrane-spanning segment. Topologically, residues 386-390 (MWLVA) are lumenal.

The protein belongs to the auxin efflux carrier (TC 2.A.69.2) family. As to expression, expressed in seedlings, rosette and cauline leaves, flowers and siliques.

The protein resides in the endoplasmic reticulum membrane. Functionally, involved in cellular auxin homeostasis by regulating auxin metabolism. Regulates intracellular auxin accumulation at the endoplasmic reticulum and thus auxin availability for nuclear auxin signaling. This Arabidopsis thaliana (Mouse-ear cress) protein is Protein PIN-LIKES 3 (PILS3).